A 385-amino-acid chain; its full sequence is Tryptophan--tRNA ligase (385 aa).

The 'HIGH' region signature appears at 82 to 90; the sequence is PSGPMHIGH. Residues 253–257 carry the 'KMSKS' region motif; that stretch reads KMSAS.

It belongs to the class-I aminoacyl-tRNA synthetase family.

The protein localises to the cytoplasm. It catalyses the reaction tRNA(Trp) + L-tryptophan + ATP = L-tryptophyl-tRNA(Trp) + AMP + diphosphate + H(+). This Pyrococcus furiosus (strain ATCC 43587 / DSM 3638 / JCM 8422 / Vc1) protein is Tryptophan--tRNA ligase.